Here is a 707-residue protein sequence, read N- to C-terminus: MAAEVYFGDLELFEPFDHPEESIPKPVHTRFKDDDGDEEDENGVGDAELRERLRQCEETIEQLRAENQELKRKLNILTRPSGILVNDTKLDGPILQILFMNNAISKQYHQEIEEFVSNLVKRFEEQQKNDVEKTSFNLLPQPSSIVLEEDHKVEESCAIKNNKEAFSVVGSVLYFTNFCLDKLGQPLLNENPQLSEGWEIPKYHQVFSHIVSLEGQEIQVKAKRPKPHCFNCGSEEHQMKDCPMPRNAARISEKRKEYMDACGEANNQNFQQRYHAEEVEERFGRFKPGVISEELQDALGVTDKSLPPFIYRMRQLGYPPGWLKEAELENSGLALYDGKDGTDGETEVGEIQQNKSVTYDLSKLVNYPGFNISTPRGIPDEWRIFGSIPMQACQQKDVFANYLTSNFQAPGVKSGNKRSSSHSSPGSPKKQKNESNSAGSPADMELDSDMEVPHGSQSSESFQFQPPLPPDTPPLPRGTPPPVFTPPLPKGTPPLTPSDSPQTRTASGAVDEDALTLEELEEQQRRIWAALEQAESVNSDSDVPVDTPLTGNSVASSPCPNELDLPVPEGKTSEKQTLDEPEVPEIFTKKSEAGHASSPDSEVTSLCQKEKAELAPVNTEGALLDNGSVVPNCDISNGGSQKLFPADTSPSTATKIHSPIPDMSKFATGITPFEFENMAESTGMYLRIRSLLKNSPRNQQKNKKASE.

At Ala-2 the chain carries N-acetylalanine. Residues 16–44 are disordered; sequence FDHPEESIPKPVHTRFKDDDGDEEDENGV. Positions 34–43 are enriched in acidic residues; the sequence is DDGDEEDENG. The stretch at 45 to 80 forms a coiled coil; sequence GDAELRERLRQCEETIEQLRAENQELKRKLNILTRP. A CCHC-type zinc finger spans residues 227–244; it reads PHCFNCGSEEHQMKDCPM. 2 RBM7 binding regions span residues 286–299 and 309–324; these read FKPGVISEELQDAL and FIYRMRQLGYPPGWLK. Residue Thr-342 is modified to Phosphothreonine. Disordered regions lie at residues 409–518, 531–607, and 641–660; these read APGV…LTLE, LEQA…TSLC, and QKLFPADTSPSTATKIHSPI. Residue Lys-413 forms a Glycyl lysine isopeptide (Lys-Gly) (interchain with G-Cter in SUMO2) linkage. Residues 456 to 465 show a composition bias toward low complexity; that stretch reads SQSSESFQFQ. Over residues 466-496 the composition is skewed to pro residues; the sequence is PPLPPDTPPLPRGTPPPVFTPPLPKGTPPLT. Residues Thr-472, Thr-479, and Thr-485 each carry the phosphothreonine modification. The residue at position 492 (Thr-492) is a Phosphothreonine; by GSK3. Residues 516-539 adopt a coiled-coil conformation; that stretch reads TLEELEEQQRRIWAALEQAESVNS. Over residues 549–559 the composition is skewed to polar residues; sequence LTGNSVASSPC. The residue at position 577 (Thr-577) is a Phosphothreonine. Ser-598 bears the Phosphoserine mark. The span at 598–607 shows a compositional bias: polar residues; sequence SPDSEVTSLC. Thr-648 bears the Phosphothreonine mark. 3 positions are modified to phosphoserine: Ser-649, Ser-658, and Ser-695. Positions 659 to 707 are MTREX binding; sequence PIPDMSKFATGITPFEFENMAESTGMYLRIRSLLKNSPRNQQKNKKASE.

The protein belongs to the ZCCHC8 family. In terms of assembly, component of a nuclear TRAMP-like complex, an ATP-dependent exosome regulatory complex consisting of a helicase (MTREX), an oligadenylate polymerase (TENT4B or TENT4A), and a substrate specific RNA-binding factor (ZCCHC7 or ZCCHC8). Several TRAMP-like complexes exist with specific compositions and are associated with nuclear, or nucleolar RNA exosomes. Identified in the spliceosome C complex. Component of the nuclear exosome targeting (NEXT) complex composed of MTREX, ZCCHC8, and RBM7 that directs a subset of non-coding short-lived RNAs for exosomal degradation. Interacts with proteins involved in RNA processing and degradation such as MTREX and RBM7; interaction with MTREX enhances MTREX RNA helicase activity and bridges between RBM7 and MTREX. Interacts with TERC, the telomerase RNA component. Phosphorylation at Thr-492 by GSK3 is triggered in cells entering mitosis; this phosphorylation is greatly enhanced by nocodazole treatment, but reduced by lithium.

It localises to the nucleus. It is found in the nucleoplasm. Its function is as follows. Scaffolding subunit of the trimeric nuclear exosome targeting (NEXT) complex that is involved in the surveillance and turnover of aberrant transcripts and non-coding RNAs. NEXT functions as an RNA exosome cofactor that directs a subset of non-coding short-lived RNAs for exosomal degradation. May be involved in pre-mRNA splicing. It is required for 3'-end maturation of telomerase RNA component (TERC), TERC 3'-end targeting to the nuclear RNA exosome, and for telomerase function. This Homo sapiens (Human) protein is Zinc finger CCHC domain-containing protein 8 (ZCCHC8).